Here is a 311-residue protein sequence, read N- to C-terminus: Ribosomal RNA small subunit methyltransferase H (311 aa).

S-adenosyl-L-methionine-binding positions include 35-37 (GGH), aspartate 55, phenylalanine 80, aspartate 102, and glutamine 109.

This sequence belongs to the methyltransferase superfamily. RsmH family.

The protein resides in the cytoplasm. The catalysed reaction is cytidine(1402) in 16S rRNA + S-adenosyl-L-methionine = N(4)-methylcytidine(1402) in 16S rRNA + S-adenosyl-L-homocysteine + H(+). Its function is as follows. Specifically methylates the N4 position of cytidine in position 1402 (C1402) of 16S rRNA. In Pseudoalteromonas atlantica (strain T6c / ATCC BAA-1087), this protein is Ribosomal RNA small subunit methyltransferase H.